Consider the following 1254-residue polypeptide: DNA-directed RNA polymerase subunit beta (1254 aa).

This sequence belongs to the RNA polymerase beta chain family. In terms of assembly, the RNAP catalytic core consists of 2 alpha, 1 beta, 1 beta' and 1 omega subunit. When a sigma factor is associated with the core the holoenzyme is formed, which can initiate transcription.

The enzyme catalyses RNA(n) + a ribonucleoside 5'-triphosphate = RNA(n+1) + diphosphate. Its function is as follows. DNA-dependent RNA polymerase catalyzes the transcription of DNA into RNA using the four ribonucleoside triphosphates as substrates. The protein is DNA-directed RNA polymerase subunit beta of Protochlamydia amoebophila (strain UWE25).